The following is a 284-amino-acid chain: Pantothenate synthetase (284 aa).

An ATP-binding site is contributed by 32–39 (MGALHDGH). His39 (proton donor) is an active-site residue. Gln63 contributes to the (R)-pantoate binding site. Gln63 provides a ligand contact to beta-alanine. 149–152 (GEKD) contacts ATP. Gln155 provides a ligand contact to (R)-pantoate. Residues Ile178 and 186–189 (MSSR) each bind ATP.

The protein belongs to the pantothenate synthetase family. As to quaternary structure, homodimer.

It localises to the cytoplasm. It carries out the reaction (R)-pantoate + beta-alanine + ATP = (R)-pantothenate + AMP + diphosphate + H(+). The protein operates within cofactor biosynthesis; (R)-pantothenate biosynthesis; (R)-pantothenate from (R)-pantoate and beta-alanine: step 1/1. Its function is as follows. Catalyzes the condensation of pantoate with beta-alanine in an ATP-dependent reaction via a pantoyl-adenylate intermediate. The protein is Pantothenate synthetase of Roseobacter denitrificans (strain ATCC 33942 / OCh 114) (Erythrobacter sp. (strain OCh 114)).